The primary structure comprises 44 residues: Small ribosomal subunit protein eS7 (44 aa).

Positions 18 to 34 (KPTRKSRIKNKQKRPRS) are enriched in basic residues. Positions 18–44 (KPTRKSRIKNKQKRPRSRTLTAVHDAI) are disordered.

Belongs to the eukaryotic ribosomal protein eS7 family. As to quaternary structure, component of the small ribosomal subunit.

It is found in the cytoplasm. It localises to the cytoskeleton. Its subcellular location is the microtubule organizing center. The protein localises to the centrosome. The protein resides in the nucleus. Its function is as follows. Component of the small ribosomal subunit. The ribosome is a large ribonucleoprotein complex responsible for the synthesis of proteins in the cell. Required for rRNA maturation. This Salmo salar (Atlantic salmon) protein is Small ribosomal subunit protein eS7 (rps7).